The chain runs to 270 residues: Glucosamine-6-phosphate deaminase (270 aa).

Catalysis depends on Asp72, which acts as the Proton acceptor; for enolization step. The active-site For ring-opening step is Asp141. The active-site Proton acceptor; for ring-opening step is His143. The For ring-opening step role is filled by Glu148.

The protein belongs to the glucosamine/galactosamine-6-phosphate isomerase family. NagB subfamily. Homohexamer.

It carries out the reaction alpha-D-glucosamine 6-phosphate + H2O = beta-D-fructose 6-phosphate + NH4(+). Its pathway is amino-sugar metabolism; N-acetylneuraminate degradation; D-fructose 6-phosphate from N-acetylneuraminate: step 5/5. Its activity is regulated as follows. Allosterically activated by N-acetylglucosamine 6-phosphate (GlcNAc6P). Functionally, catalyzes the reversible isomerization-deamination of glucosamine 6-phosphate (GlcN6P) to form fructose 6-phosphate (Fru6P) and ammonium ion. In Haemophilus influenzae (strain 86-028NP), this protein is Glucosamine-6-phosphate deaminase.